The primary structure comprises 439 residues: MMYAPVEFSQTAYPRIEYQRRQQQFWDPIRLALFTLAIVAIVGITIGIVTHFVVEDDKSFYYLASFQVTSIKYRENYGIRSSREFIERSHQIERMMSRIFRRSSGVGRFIKSHVIKISPDEQGVNILIVLMFRYPSTDSAERIKKRIERTFYQSLKIKQLPLTISMPSFSLTPIDSKKMRNLLNSRCGIRMSSSNIPLPASSSTERIVQGRETAMEGEWPWQASLQLIGAGHQCGATLISNTWLLTAAHCFWKNRDPTKWIVTFGTTITPPLVKRSVGKIIIHEEYHRDTNENDIALAQLTTRVEFSNVVQRVCLPDSSMKLPPKTSVFVTGFGSIVDDGPTQNKLRQARVETIGSDVCNRKDVYDGLITPGMLCAGFMEGKIDACKGDSGGPLVYDNRDIWYIVGIVSWGQSCALPNKPGVYTRVTKYRDWIASKTGL.

At Met-1–Leu-33 the chain is on the cytoplasmic side. The helical; Signal-anchor for type II membrane protein transmembrane segment at Phe-34–Val-54 threads the bilayer. Residues Glu-55–Leu-439 are Extracellular-facing. The SEA domain maps to Lys-58 to Ser-176. Residues Ile-207 to Gly-438 enclose the Peptidase S1 domain. A disulfide bridge links Cys-234 with Cys-250. Active-site charge relay system residues include His-249 and Asp-294. Cystine bridges form between Cys-359–Cys-375 and Cys-386–Cys-414. Ser-390 (charge relay system) is an active-site residue.

It belongs to the peptidase S1 family.

The protein localises to the membrane. Its function is as follows. Probable serine protease. The protein is Transmembrane protease serine 11F (Tmprss11f) of Mus musculus (Mouse).